The sequence spans 461 residues: Putative forkhead-related transcription factor fkh-5 (461 aa).

The fork-head DNA-binding region spans 171-262 (QRPQLSYQLL…VEKEMIDVKT (92 aa)).

The protein localises to the nucleus. In terms of biological role, transcription factor. Binds to DNA sequence motif 5'-CTGTTTCA-3'. Regulates expression of a class of small RNAs, known as 21U-RNAs, perhaps acting redundantly with fkh-4 and fkh-3. The polypeptide is Putative forkhead-related transcription factor fkh-5 (fkh-5) (Caenorhabditis elegans).